The chain runs to 225 residues: MRAITNSGWIEVVTGSMFSGKTEELLRRLRRAEIAGQSIAVFKPAVDDRYGETTVGSHVGRQWEAAVVPNEGEDIWNIKHELSKKKQNHRTTTQCRSGDGTNNPGGVIPSNDDSVDVVAIDEANFFSTELVSVCESLANDGYRVVVSGTDQTYRGEPFEPLPQLMAVAEYVDKLQAICTQCGEPATRNQRLVDDSPAHIDDPTIVVGADETYEARCRNCHILRHE.

Position 15–22 (15–22 (GSMFSGKT)) interacts with ATP. The disordered stretch occupies residues 85–110 (KKQNHRTTTQCRSGDGTNNPGGVIPS). Over residues 90 to 104 (RTTTQCRSGDGTNNP) the composition is skewed to polar residues. Residue 121–124 (DEAN) participates in ATP binding. The Proton acceptor role is filled by Glu122. Zn(2+) is bound by residues Cys178, Cys181, Cys216, and Cys219.

This sequence belongs to the thymidine kinase family. In terms of assembly, homotetramer.

It is found in the cytoplasm. The enzyme catalyses thymidine + ATP = dTMP + ADP + H(+). This chain is Thymidine kinase, found in Haloquadratum walsbyi (strain DSM 16790 / HBSQ001).